The sequence spans 200 residues: Small ribosomal subunit protein uS4 (200 aa).

A disordered region spans residues 22–42; that stretch reads TGKELEKRPYAPGPHGPNQRK. An S4 RNA-binding domain is found at 92 to 152; the sequence is ARLDNLVYRM…EKSRNLAVIK (61 aa).

It belongs to the universal ribosomal protein uS4 family. Part of the 30S ribosomal subunit. Contacts protein S5. The interaction surface between S4 and S5 is involved in control of translational fidelity.

One of the primary rRNA binding proteins, it binds directly to 16S rRNA where it nucleates assembly of the body of the 30S subunit. In terms of biological role, with S5 and S12 plays an important role in translational accuracy. This is Small ribosomal subunit protein uS4 from Bacillus cytotoxicus (strain DSM 22905 / CIP 110041 / 391-98 / NVH 391-98).